We begin with the raw amino-acid sequence, 407 residues long: Cation efflux system protein CusB (407 aa).

An N-terminal signal peptide occupies residues 1–28 (MKKIALIIGSMIAGGIISAAGFTWFAKA).

The protein belongs to the membrane fusion protein (MFP) (TC 8.A.1) family. As to quaternary structure, the cus efflux system is composed of CusA, CusB, CusC and CusF.

In terms of biological role, part of a cation efflux system that mediates resistance to copper and silver. This Escherichia coli O157:H7 protein is Cation efflux system protein CusB (cusB).